A 413-amino-acid polypeptide reads, in one-letter code: FAD-dependent monooxygenase vrtH (413 aa).

An N-terminal signal peptide occupies residues 1–23 (MQRANHTRPVLIIGAGLSGLAIG). A glycan (N-linked (GlcNAc...) asparagine) is linked at Asn-5. Residues Glu-37 and Ala-48 each coordinate FAD. The N-linked (GlcNAc...) asparagine glycan is linked to Asn-94. Residue Arg-120 coordinates FAD. An N-linked (GlcNAc...) asparagine glycan is attached at Asn-232. Residues Asp-327 and Gly-340 each contribute to the FAD site.

It belongs to the paxM FAD-dependent monooxygenase family. It depends on FAD as a cofactor.

It participates in secondary metabolite biosynthesis; terpenoid biosynthesis. FAD-dependent monooxygenase; part of the gene cluster that mediates the biosynthesis of viridicatumtoxin, a tetracycline-like fungal meroterpenoid with a unique, fused spirobicyclic ring system. The first step of the pathway is the production of the malonamoyl-CoA starter unit for the polyketide synthase vrtA. The aldolase vrtJ may be involved in the synthesis of the malonamate substrate for malonamoyl-CoA synthetase vrtB. The polyketide synthase vrtA then may utilize the malonamoyl-CoA starter unit, followed by sequential condensation of eight malonyl-CoA units to form the polyketide backbone. The cyclization of the last ring could be mediated by the lactamase-like protein vrtG. The proposed post-PKS tailoring steps are a hydroxylation at C5 catalyzed the cytochrome P450 monooxygenase vrtE, a hydroxylation at C12a catalyzed by VrtH and/or VrtI, and an O-methylation by the O-methyltransferase vrtF. VrtC is then proposed to catalyze the transfer of a geranyl group synthesized by vrtD to the aromatic C ring of the tetracyclic polyketide intermediate of viridicatumtoxin to yield previridicatumtoxin. Finally, the cytochrome P450 monooxygenase vrtK catalyzes the spirocyclization of the geranyl moiety of previridicatumtoxin to afford viridicatumtoxin. The sequence is that of FAD-dependent monooxygenase vrtH from Penicillium aethiopicum.